We begin with the raw amino-acid sequence, 185 residues long: Peptidyl-tRNA hydrolase (185 aa).

Y14 contacts tRNA. The active-site Proton acceptor is the H19. TRNA is bound by residues Y64, N66, and N112.

The protein belongs to the PTH family. As to quaternary structure, monomer.

The protein resides in the cytoplasm. It carries out the reaction an N-acyl-L-alpha-aminoacyl-tRNA + H2O = an N-acyl-L-amino acid + a tRNA + H(+). Hydrolyzes ribosome-free peptidyl-tRNAs (with 1 or more amino acids incorporated), which drop off the ribosome during protein synthesis, or as a result of ribosome stalling. Functionally, catalyzes the release of premature peptidyl moieties from peptidyl-tRNA molecules trapped in stalled 50S ribosomal subunits, and thus maintains levels of free tRNAs and 50S ribosomes. The sequence is that of Peptidyl-tRNA hydrolase from Lactobacillus helveticus (strain DPC 4571).